A 384-amino-acid polypeptide reads, in one-letter code: NAD(P) transhydrogenase subunit alpha part 1 (384 aa).

The segment at 126–136 is RQD loop; involved in interaction with PntB; sequence PRISRAQSMDI. Residues 127–129, 132–135, 180–182, 202–204, Gly234, Gln247, and Leu266 contribute to the NAD(+) site; these read RIS, QSMD, VGV, and DVR.

This sequence belongs to the AlaDH/PNT family. In terms of assembly, heterotrimer of two alpha chains and a beta (PntB) chain; in Rhodospirillum, the alpha chain is made of two subunits (PntAA and PntAB) and forms a dimer.

It catalyses the reaction NAD(+) + NADPH + H(+)(in) = NADH + NADP(+) + H(+)(out). The transhydrogenation between NADH and NADP is coupled to respiration and ATP hydrolysis and functions as a proton pump across the membrane. In Rhodospirillum rubrum (strain ATCC 11170 / ATH 1.1.1 / DSM 467 / LMG 4362 / NCIMB 8255 / S1), this protein is NAD(P) transhydrogenase subunit alpha part 1 (pntAA).